The primary structure comprises 394 residues: DNA repair protein brc-2 (394 aa).

Over residues 1 to 12 (MGDSSKKVKDSF) the composition is skewed to basic and acidic residues. Disordered regions lie at residues 1–30 (MGDS…VPIS) and 56–136 (MLNS…EKKK). Positions 1–60 (MGDSSKKVKDSFDTISEPDSFDEPKGVPISMEPVFSTAAGIRIDVKQESIDKSKKMLNSD) are interaction with rad-51. The interval 28-62 (PISMEPVFSTAAGIRIDVKQESIDKSKKMLNSDLK) is BRCA2 repeat-like region. Residues 56–73 (MLNSDLKSKSSSKGGFSS) are compositionally biased toward low complexity. The segment at 60–89 (DLKSKSSSKGGFSSPLVRKNNGSSAFVSPF) is interaction with rad-51-DNA complexes. Basic residues predominate over residues 124–134 (KKSKKHSKKEK). A required for ssDNA binding region spans residues 371-389 (WKDFGSYLKHKEDKKKRRS).

As to quaternary structure, interacts (via N-terminus) with rad-51; regulates rad-51 recruitment to sites of DNA double strand breaks. In terms of tissue distribution, expressed in the germline, with highest expression in cells undergoing oogenesis.

The protein resides in the nucleus. It localises to the chromosome. Its function is as follows. Required for the homologous recombination repair of DNA double strand breaks, thereby playing a role in chromosome integrity. Acts by targeting rad-51 to sites of DNA damage and stabilizing rad-51-DNA filaments by blocking ATP hydrolysis catalyzed by rad-51. Promotes rad-51 mediated displacement-loop (D-loop) formation during strand invasion between the invading single-stranded DNA (ssDNA) and the homologous duplex DNA. Also functions independently of rad-51 in DNA double-strand break (DSB) repair by promoting DNA single-strand annealing (SSA) when the homologous recombination (HR) and non-homologous end joining (NHEJ) pathways are compromised. Binds selectively to single-stranded (ssDNA) via its C-terminus. Involved in telomere maintenance and replicative senescence. In Caenorhabditis elegans, this protein is DNA repair protein brc-2.